A 209-amino-acid chain; its full sequence is UPF0319 protein VF_1616 (209 aa).

The N-terminal stretch at 1–21 (MKIQSIFAASFCLLSSISAHA) is a signal peptide.

It belongs to the UPF0319 family.

The protein is UPF0319 protein VF_1616 of Aliivibrio fischeri (strain ATCC 700601 / ES114) (Vibrio fischeri).